The chain runs to 400 residues: uncharacterized protein (400 aa).

A TR mART core domain is found at 161-380; it reads NDLLNIIDIV…YVVKVIVMRL (220 aa).

This is an uncharacterized protein from Acanthamoeba polyphaga (Amoeba).